A 335-amino-acid chain; its full sequence is Succinylglutamate desuccinylase (335 aa).

Zn(2+)-binding residues include His-59, Glu-62, and His-151. Residue Glu-215 is part of the active site.

This sequence belongs to the AspA/AstE family. Succinylglutamate desuccinylase subfamily. Zn(2+) is required as a cofactor.

It carries out the reaction N-succinyl-L-glutamate + H2O = L-glutamate + succinate. The protein operates within amino-acid degradation; L-arginine degradation via AST pathway; L-glutamate and succinate from L-arginine: step 5/5. Transforms N(2)-succinylglutamate into succinate and glutamate. In Pseudomonas syringae pv. tomato (strain ATCC BAA-871 / DC3000), this protein is Succinylglutamate desuccinylase.